The primary structure comprises 318 residues: Pyrimidine-specific ribonucleoside hydrolase RihA (318 aa).

Residue His-240 is part of the active site.

This sequence belongs to the IUNH family. RihA subfamily.

Functionally, hydrolyzes cytidine or uridine to ribose and cytosine or uracil, respectively. The protein is Pyrimidine-specific ribonucleoside hydrolase RihA of Shewanella oneidensis (strain ATCC 700550 / JCM 31522 / CIP 106686 / LMG 19005 / NCIMB 14063 / MR-1).